We begin with the raw amino-acid sequence, 232 residues long: Thiamine import ATP-binding protein ThiQ (232 aa).

In terms of domain architecture, ABC transporter spans 2-230; it reads LKLTDITWLY…KASASAILGI (229 aa). 32–39 serves as a coordination point for ATP; the sequence is GPSGAGKS.

The protein belongs to the ABC transporter superfamily. Thiamine importer (TC 3.A.1.19.1) family. As to quaternary structure, the complex is composed of two ATP-binding proteins (ThiQ), two transmembrane proteins (ThiP) and a solute-binding protein (ThiB).

The protein resides in the cell inner membrane. It carries out the reaction thiamine(out) + ATP + H2O = thiamine(in) + ADP + phosphate + H(+). Functionally, part of the ABC transporter complex ThiBPQ involved in thiamine import. Responsible for energy coupling to the transport system. The sequence is that of Thiamine import ATP-binding protein ThiQ from Shigella flexneri serotype 5b (strain 8401).